The chain runs to 557 residues: Formate--tetrahydrofolate ligase (557 aa).

Threonine 66–serine 73 serves as a coordination point for ATP.

Belongs to the formate--tetrahydrofolate ligase family.

The enzyme catalyses (6S)-5,6,7,8-tetrahydrofolate + formate + ATP = (6R)-10-formyltetrahydrofolate + ADP + phosphate. It participates in one-carbon metabolism; tetrahydrofolate interconversion. This chain is Formate--tetrahydrofolate ligase, found in Clostridium botulinum (strain 657 / Type Ba4).